The chain runs to 681 residues: Translation factor GUF1 homolog, chloroplastic (681 aa).

The transit peptide at 1 to 51 (MAMASAMDLSSPPTFFLSGTSTSSPSLRRLSSISVSGFRRHSNRKLQILCQ) directs the protein to the chloroplast. In terms of domain architecture, tr-type G spans 84-265 (SNIRNFSIIA…AIVQRIPAPL (182 aa)). GTP contacts are provided by residues 93–100 (AHIDHGKS), 158–162 (DTPGH), and 212–215 (NKID).

The protein belongs to the TRAFAC class translation factor GTPase superfamily. Classic translation factor GTPase family. LepA subfamily.

Its subcellular location is the plastid. It is found in the chloroplast. It catalyses the reaction GTP + H2O = GDP + phosphate + H(+). Functionally, promotes chloroplast protein synthesis. May act as a fidelity factor of the translation reaction, by catalyzing a one-codon backward translocation of tRNAs on improperly translocated ribosomes. The protein is Translation factor GUF1 homolog, chloroplastic of Arabidopsis thaliana (Mouse-ear cress).